The primary structure comprises 689 residues: Bifunctional protein GAL10 (689 aa).

A galactowaldenase region spans residues 1-345; sequence MSYILVTGGA…TTKNPFGFQI (345 aa). An NAD(+)-binding site is contributed by 3 to 34; sequence YILVTGGAGYIGSHTVVELVNNGYNVVVVDNL. The interval 346-689 is mutarotase; the sequence is NNYSWTKFDS…SYTIYRFENF (344 aa). His-534 (for mutarotase activity) is an active-site residue.

The protein in the N-terminal section; belongs to the NAD(P)-dependent epimerase/dehydratase family. In the C-terminal section; belongs to the aldose epimerase family. It depends on NAD(+) as a cofactor.

It catalyses the reaction UDP-alpha-D-glucose = UDP-alpha-D-galactose. It carries out the reaction alpha-D-glucose = beta-D-glucose. It participates in carbohydrate metabolism; galactose metabolism. It functions in the pathway carbohydrate metabolism; hexose metabolism. Its function is as follows. Mutarotase converts alpha-aldose to the beta-anomer. It is active on D-glucose, L-arabinose, D-xylose, D-galactose, maltose and lactose. The sequence is that of Bifunctional protein GAL10 (GAL10) from Pachysolen tannophilus (Yeast).